Consider the following 240-residue polypeptide: CRISPR system aCascade subunit Cas5 1 (240 aa).

Belongs to the CRISPR-associated protein Cas5 family. Subtype I-A/Apern subfamily. As to quaternary structure, part of the aCascade ribonucleoprotein complex, minimally composed of Csa2 and Cas5a, which binds crRNA. Other possible components of aCascade in strain P1 are Cas6b (SSO1437) and Csa5 (SSO1443), while SSO1399, Cas5b (SSO1400) and SSO1401 have sometimes been seen weakly associated. Csa2 is probably the major RNA-binding subunit. The Csa2-Cas5a-crRNA complex also binds target DNA homologous to crRNA, probably forming an R-loop. Purified aCascade forms a filament about 6 nm in width.

Functionally, CRISPR (clustered regularly interspaced short palindromic repeat) is an adaptive immune system that provides protection against mobile genetic elements (viruses, transposable elements and conjugative plasmids). CRISPR clusters contain spacers, sequences complementary to antecedent mobile elements, and target invading nucleic acids. CRISPR clusters are transcribed and processed into CRISPR RNA (crRNA). The sequence is that of CRISPR system aCascade subunit Cas5 1 (cas5a) from Saccharolobus solfataricus (strain ATCC 35092 / DSM 1617 / JCM 11322 / P2) (Sulfolobus solfataricus).